The chain runs to 496 residues: Probable ATP-dependent DNA helicase RecS (496 aa).

One can recognise a Helicase ATP-binding domain in the interval 25–192; the sequence is IESILSGKDT…MNLLELQHAV (168 aa). 38-45 serves as a coordination point for ATP; that stretch reads LPTGGGKS. Positions 136–139 match the DEAH box motif; the sequence is DEAH. In terms of domain architecture, Helicase C-terminal spans 219–363; it reads RVIQLVENLQ…EIADVIRVLE (145 aa).

Belongs to the helicase family. RecQ subfamily. In terms of assembly, interacts with SSB (ssbA) and YpbB.

Its subcellular location is the cytoplasm. It is found in the nucleoid. The enzyme catalyses Couples ATP hydrolysis with the unwinding of duplex DNA by translocating in the 3'-5' direction.. The catalysed reaction is ATP + H2O = ADP + phosphate + H(+). Its function is as follows. Probable 3'-5' DNA helicase. Required in synaptic and/or post-synaptic stages of recombination. Probably has an overlapping function with RecQ. It probably acts to help generate ss-DNA from ds-DNA breaks. This is Probable ATP-dependent DNA helicase RecS from Bacillus subtilis (strain 168).